A 479-amino-acid polypeptide reads, in one-letter code: Glycogen synthase (479 aa).

An ADP-alpha-D-glucose-binding site is contributed by K15.

It belongs to the glycosyltransferase 1 family. Bacterial/plant glycogen synthase subfamily.

It catalyses the reaction [(1-&gt;4)-alpha-D-glucosyl](n) + ADP-alpha-D-glucose = [(1-&gt;4)-alpha-D-glucosyl](n+1) + ADP + H(+). The protein operates within glycan biosynthesis; glycogen biosynthesis. Its function is as follows. Synthesizes alpha-1,4-glucan chains using ADP-glucose. This Clostridium beijerinckii (strain ATCC 51743 / NCIMB 8052) (Clostridium acetobutylicum) protein is Glycogen synthase.